A 65-amino-acid chain; its full sequence is Large ribosomal subunit protein bL35 (65 aa).

Basic residues-rich tracts occupy residues methionine 1–threonine 15 and glutamine 26–leucine 44. Residues methionine 1–alanine 65 are disordered.

The protein belongs to the bacterial ribosomal protein bL35 family.

This is Large ribosomal subunit protein bL35 from Ralstonia nicotianae (strain ATCC BAA-1114 / GMI1000) (Ralstonia solanacearum).